The chain runs to 652 residues: DNA ligase (652 aa).

Residues 29–33 (DSDYD), 78–79 (SL), and glutamate 107 each bind NAD(+). Lysine 109 serves as the catalytic N6-AMP-lysine intermediate. NAD(+)-binding residues include arginine 130, glutamate 164, lysine 278, and lysine 302. Cysteine 395, cysteine 398, cysteine 413, and cysteine 418 together coordinate Zn(2+). The BRCT domain occupies 577 to 652 (NSDAALFGLT…IEDEDWLRQL (76 aa)).

This sequence belongs to the NAD-dependent DNA ligase family. LigA subfamily. Requires Mg(2+) as cofactor. Mn(2+) serves as cofactor.

The catalysed reaction is NAD(+) + (deoxyribonucleotide)n-3'-hydroxyl + 5'-phospho-(deoxyribonucleotide)m = (deoxyribonucleotide)n+m + AMP + beta-nicotinamide D-nucleotide.. DNA ligase that catalyzes the formation of phosphodiester linkages between 5'-phosphoryl and 3'-hydroxyl groups in double-stranded DNA using NAD as a coenzyme and as the energy source for the reaction. It is essential for DNA replication and repair of damaged DNA. This Streptococcus pyogenes serotype M12 (strain MGAS2096) protein is DNA ligase.